A 397-amino-acid chain; its full sequence is Lysophospholipid transporter LplT (397 aa).

A run of 11 helical transmembrane segments spans residues 16–36 (MLAV…LLFA), 53–73 (VLQM…GQFA), 91–111 (LGAG…LVGI), 139–159 (LMES…GILA), 164–184 (LAAL…NLWI), 227–247 (LFWG…PVAL), 253–273 (AMPT…AGAA), 281–301 (TVSR…AFAV), 305–325 (LLPA…FIVP), 352–372 (NVAM…GVPP), and 373–393 (VAVG…LWVW).

Belongs to the major facilitator superfamily. LplT (TC 2.A.1.42) family.

It localises to the cell inner membrane. Its function is as follows. Catalyzes the facilitated diffusion of 2-acyl-glycero-3-phosphoethanolamine (2-acyl-GPE) into the cell. The protein is Lysophospholipid transporter LplT of Klebsiella pneumoniae (strain 342).